Reading from the N-terminus, the 240-residue chain is UDP-2,3-diacylglucosamine hydrolase (240 aa).

Residues Asp8, His10, Asp41, Asn79, and His114 each contribute to the Mn(2+) site. Position 79–80 (79–80) interacts with substrate; it reads NR. Substrate is bound by residues Asp122, Ser160, Asn164, Lys167, and His195. 2 residues coordinate Mn(2+): His195 and His197.

It belongs to the LpxH family. Mn(2+) serves as cofactor.

It is found in the cell inner membrane. The enzyme catalyses UDP-2-N,3-O-bis[(3R)-3-hydroxytetradecanoyl]-alpha-D-glucosamine + H2O = 2-N,3-O-bis[(3R)-3-hydroxytetradecanoyl]-alpha-D-glucosaminyl 1-phosphate + UMP + 2 H(+). It participates in glycolipid biosynthesis; lipid IV(A) biosynthesis; lipid IV(A) from (3R)-3-hydroxytetradecanoyl-[acyl-carrier-protein] and UDP-N-acetyl-alpha-D-glucosamine: step 4/6. Functionally, hydrolyzes the pyrophosphate bond of UDP-2,3-diacylglucosamine to yield 2,3-diacylglucosamine 1-phosphate (lipid X) and UMP by catalyzing the attack of water at the alpha-P atom. Involved in the biosynthesis of lipid A, a phosphorylated glycolipid that anchors the lipopolysaccharide to the outer membrane of the cell. The polypeptide is UDP-2,3-diacylglucosamine hydrolase (Escherichia coli O6:H1 (strain CFT073 / ATCC 700928 / UPEC)).